The sequence spans 328 residues: Zinc chaperone YeiR (328 aa).

9–17 (GFLGSGKTT) contacts GTP. Positions 63 to 66 (CMCC) match the CXCC motif motif. Aspartate 155 lines the GTP pocket. Residues 241 to 321 (CGWIFDADTV…WNALQSALLK (81 aa)) form the CobW C-terminal domain.

It belongs to the SIMIBI class G3E GTPase family. ZNG1 subfamily. In terms of assembly, oligomerizes in the presence of Zn(2+).

It carries out the reaction GTP + H2O = GDP + phosphate + H(+). GTPase activity is enhanced by Zn(2+) binding. Its function is as follows. Zinc chaperone that directly transfers zinc cofactor to target proteins, thereby activating them. Zinc is transferred from the CXCC motif in the GTPase domain to the zinc binding site in target proteins in a process requiring GTP hydrolysis. The sequence is that of Zinc chaperone YeiR (yeiR) from Escherichia coli (strain K12).